A 375-amino-acid chain; its full sequence is Chaperone protein DnaJ (375 aa).

The region spanning 5-70 (DYYEVLGVAR…NKRRAYDAHG (66 aa)) is the J domain. A CR-type zinc finger spans residues 131 to 208 (GIERRIEIPT…CHGAGRVEED (78 aa)). Zn(2+) is bound by residues cysteine 144, cysteine 147, cysteine 160, cysteine 163, cysteine 182, cysteine 185, cysteine 196, and cysteine 199. CXXCXGXG motif repeat units lie at residues 144-151 (CAPCHGSG), 160-167 (CGTCHGRG), 182-189 (CPHCDGRG), and 196-203 (CKTCHGAG).

Belongs to the DnaJ family. Homodimer. The cofactor is Zn(2+).

It localises to the cytoplasm. Functionally, participates actively in the response to hyperosmotic and heat shock by preventing the aggregation of stress-denatured proteins and by disaggregating proteins, also in an autonomous, DnaK-independent fashion. Unfolded proteins bind initially to DnaJ; upon interaction with the DnaJ-bound protein, DnaK hydrolyzes its bound ATP, resulting in the formation of a stable complex. GrpE releases ADP from DnaK; ATP binding to DnaK triggers the release of the substrate protein, thus completing the reaction cycle. Several rounds of ATP-dependent interactions between DnaJ, DnaK and GrpE are required for fully efficient folding. Also involved, together with DnaK and GrpE, in the DNA replication of plasmids through activation of initiation proteins. In Xanthomonas axonopodis pv. citri (strain 306), this protein is Chaperone protein DnaJ.